Here is a 120-residue protein sequence, read N- to C-terminus: Ribonuclease P protein component 4 (120 aa).

Zn(2+) is bound by residues Cys67, Cys70, Cys96, and Cys99.

It belongs to the eukaryotic/archaeal RNase P protein component 4 family. In terms of assembly, consists of a catalytic RNA component and at least 4-5 protein subunits. Zn(2+) serves as cofactor.

The protein resides in the cytoplasm. It catalyses the reaction Endonucleolytic cleavage of RNA, removing 5'-extranucleotides from tRNA precursor.. Its function is as follows. Part of ribonuclease P, a protein complex that generates mature tRNA molecules by cleaving their 5'-ends. This chain is Ribonuclease P protein component 4, found in Thermococcus sibiricus (strain DSM 12597 / MM 739).